The chain runs to 484 residues: Transcription factor cghD (484 aa).

Residues 21–54 constitute a DNA-binding region (zn(2)-C6 fungal-type); the sequence is CDRCRLQKLKCTVQSMESDGRMVCERCVRAKVPC. 4 disordered regions span residues 59 to 117, 136 to 174, 202 to 242, and 386 to 406; these read RRRA…PTLA, TTAPTYSYHHHHHDSYQLGEGPPTPFPNPATTGGGSGSS, PAST…FSTT, and HMHSTPAPTTSPTLQLGELPS. Basic and acidic residues predominate over residues 64–76; that stretch reads RPSDTKKQGDSST. Low complexity predominate over residues 77 to 107; that stretch reads RRSTAPRTTNPEPTVLTPPLSTTSSTSEQTL. Residues 202–213 are compositionally biased toward low complexity; it reads PASTSTSTGSPT.

It localises to the nucleus. Functionally, transcription factor that regulates the expression of the gene cluster that mediates the biosynthesis of the tetramic acid Sch210972, a potential anti-HIV fungal natural product that contains a decalin core. This chain is Transcription factor cghD, found in Chaetomium globosum (strain ATCC 6205 / CBS 148.51 / DSM 1962 / NBRC 6347 / NRRL 1970) (Soil fungus).